A 524-amino-acid polypeptide reads, in one-letter code: Histidine ammonia-lyase (524 aa).

A cross-link (5-imidazolinone (Ala-Gly)) is located at residues Ala-139–Gly-141. The residue at position 140 (Ser-140) is a 2,3-didehydroalanine (Ser). The disordered stretch occupies residues Ala-500–His-524.

It belongs to the PAL/histidase family. Contains an active site 4-methylidene-imidazol-5-one (MIO), which is formed autocatalytically by cyclization and dehydration of residues Ala-Ser-Gly.

Its subcellular location is the cytoplasm. It carries out the reaction L-histidine = trans-urocanate + NH4(+). It functions in the pathway amino-acid degradation; L-histidine degradation into L-glutamate; N-formimidoyl-L-glutamate from L-histidine: step 1/3. In Deinococcus radiodurans (strain ATCC 13939 / DSM 20539 / JCM 16871 / CCUG 27074 / LMG 4051 / NBRC 15346 / NCIMB 9279 / VKM B-1422 / R1), this protein is Histidine ammonia-lyase (hutH).